The sequence spans 172 residues: UPF0102 protein Pcryo_2198 (172 aa).

Belongs to the UPF0102 family.

This chain is UPF0102 protein Pcryo_2198, found in Psychrobacter cryohalolentis (strain ATCC BAA-1226 / DSM 17306 / VKM B-2378 / K5).